Here is an 83-residue protein sequence, read N- to C-terminus: Toxin AahP985 (83 aa).

The signal sequence occupies residues 1 to 18; sequence MNYLVMISLALLIAGVDS. The 63-residue stretch at 20-82 folds into the LCN-type CS-alpha/beta domain; that stretch reads RDAYIAKNDN…VPIKLSGECH (63 aa). 4 disulfides stabilise this stretch: Cys30-Cys81, Cys34-Cys54, Cys40-Cys64, and Cys44-Cys66.

It belongs to the long (4 C-C) scorpion toxin superfamily. Sodium channel inhibitor family. Alpha subfamily. Expressed by the venom gland.

Its subcellular location is the secreted. Functionally, binds voltage-independently at site-3 of sodium channels (Nav) and inhibits the inactivation of the activated channels, thereby blocking neuronal transmission. This Androctonus australis (Sahara scorpion) protein is Toxin AahP985.